Consider the following 256-residue polypeptide: Pimeloyl-[acyl-carrier protein] methyl ester esterase (256 aa).

One can recognise an AB hydrolase-1 domain in the interval 15–242; sequence HLVLLHGWGL…AAHAPFISHP (228 aa). Residues W22, 82–83, and 143–147 contribute to the substrate site; these read SL and FLALQ. The active-site Nucleophile is S82. Active-site residues include D207 and H235. A substrate-binding site is contributed by H235.

It belongs to the AB hydrolase superfamily. Carboxylesterase BioH family. Monomer.

Its subcellular location is the cytoplasm. It carries out the reaction 6-carboxyhexanoyl-[ACP] methyl ester + H2O = 6-carboxyhexanoyl-[ACP] + methanol + H(+). It participates in cofactor biosynthesis; biotin biosynthesis. In terms of biological role, the physiological role of BioH is to remove the methyl group introduced by BioC when the pimeloyl moiety is complete. It allows to synthesize pimeloyl-ACP via the fatty acid synthetic pathway through the hydrolysis of the ester bonds of pimeloyl-ACP esters. The sequence is that of Pimeloyl-[acyl-carrier protein] methyl ester esterase from Escherichia coli O127:H6 (strain E2348/69 / EPEC).